A 1056-amino-acid chain; its full sequence is Carbamoyl phosphate synthase large chain (1056 aa).

A carboxyphosphate synthetic domain region spans residues 1–399; it reads MKIDVSKVIV…AFQKAIRMLD (399 aa). 12 residues coordinate ATP: Arg127, Arg167, Gly173, Gly174, Lys206, Leu208, Glu213, Gly239, Val240, His241, Gln282, and Glu296. The ATP-grasp 1 domain occupies 131–325; it reads QKTMKKVGLP…LAYIATKLAI (195 aa). Mg(2+) contacts are provided by Gln282, Glu296, and Asn298. The Mn(2+) site is built by Gln282, Glu296, and Asn298. The interval 400 to 536 is oligomerization domain; the sequence is IGDELIGKYY…VTYDGVENDI (137 aa). Positions 537 to 919 are carbamoyl phosphate synthetic domain; sequence PKPKKPSILV…LKSWLSVKPN (383 aa). The 189-residue stretch at 661 to 849 folds into the ATP-grasp 2 domain; the sequence is SKLLEKLGIP…LMELSAQAVL (189 aa). Positions 697, 736, 738, 742, 766, 767, 768, 769, 809, and 820 each coordinate ATP. Gln809, Glu820, and Asn822 together coordinate Mg(2+). 3 residues coordinate Mn(2+): Gln809, Glu820, and Asn822. The MGS-like domain occupies 915 to 1043; sequence SVKPNELPKT…REYWIRKIEE (129 aa). The interval 920–1056 is allosteric domain; that stretch reads ELPKTSALIY…EYAASVVLRR (137 aa).

It belongs to the CarB family. Composed of two chains; the small (or glutamine) chain promotes the hydrolysis of glutamine to ammonia, which is used by the large (or ammonia) chain to synthesize carbamoyl phosphate. Tetramer of heterodimers (alpha,beta)4. The cofactor is Mg(2+). It depends on Mn(2+) as a cofactor.

The catalysed reaction is hydrogencarbonate + L-glutamine + 2 ATP + H2O = carbamoyl phosphate + L-glutamate + 2 ADP + phosphate + 2 H(+). The enzyme catalyses hydrogencarbonate + NH4(+) + 2 ATP = carbamoyl phosphate + 2 ADP + phosphate + 2 H(+). Its pathway is amino-acid biosynthesis; L-arginine biosynthesis; carbamoyl phosphate from bicarbonate: step 1/1. It functions in the pathway pyrimidine metabolism; UMP biosynthesis via de novo pathway; (S)-dihydroorotate from bicarbonate: step 1/3. In terms of biological role, large subunit of the glutamine-dependent carbamoyl phosphate synthetase (CPSase). CPSase catalyzes the formation of carbamoyl phosphate from the ammonia moiety of glutamine, carbonate, and phosphate donated by ATP, constituting the first step of 2 biosynthetic pathways, one leading to arginine and/or urea and the other to pyrimidine nucleotides. The large subunit (synthetase) binds the substrates ammonia (free or transferred from glutamine from the small subunit), hydrogencarbonate and ATP and carries out an ATP-coupled ligase reaction, activating hydrogencarbonate by forming carboxy phosphate which reacts with ammonia to form carbamoyl phosphate. This Pyrococcus furiosus (strain ATCC 43587 / DSM 3638 / JCM 8422 / Vc1) protein is Carbamoyl phosphate synthase large chain.